The sequence spans 376 residues: 28S rRNA (uridine-N(3))-methyltransferase (376 aa).

2 disordered regions span residues 1-33 (MAER…EEKK) and 49-71 (AQEE…DRGR). A compositionally biased stretch (basic and acidic residues) spans 15–33 (HGQRIEWRKWKQQKKEEKK). Residues T289, R292, G312, N341, and T342 each contribute to the S-adenosyl-L-homocysteine site. Positions 292, 312, 341, and 342 each coordinate S-adenosyl-L-methionine.

The protein belongs to the class IV-like SAM-binding methyltransferase superfamily. In terms of assembly, interacts with INCA1.

Its subcellular location is the cytoplasm. The protein resides in the cytoskeleton. The protein localises to the spindle. It localises to the chromosome. It is found in the centromere. Its subcellular location is the kinetochore. The protein resides in the microtubule organizing center. The protein localises to the centrosome. It catalyses the reaction uridine in 28S rRNA + S-adenosyl-L-methionine = N(3)-methyluridine in 28S rRNA + S-adenosyl-L-homocysteine + H(+). In terms of biological role, S-adenosyl-L-methionine-dependent methyltransferase that specifically methylates the N3 position of a uridine in 28S rRNA. Required for association of the centrosomes with the poles of the bipolar mitotic spindle during metaphase. Also involved in chromosome alignment. May promote centrosome maturation probably by recruiting A-kinase anchor protein AKAP9 to centrosomes in early mitosis. Binds specifically to miRNA MIR145 hairpin, regulates MIR145 expression at a postranscriptional level. The sequence is that of 28S rRNA (uridine-N(3))-methyltransferase from Homo sapiens (Human).